The following is a 401-amino-acid chain: Mannonate dehydratase (401 aa).

The protein belongs to the mannonate dehydratase family. It depends on Fe(2+) as a cofactor. Mn(2+) serves as cofactor.

The catalysed reaction is D-mannonate = 2-dehydro-3-deoxy-D-gluconate + H2O. It participates in carbohydrate metabolism; pentose and glucuronate interconversion. Its function is as follows. Catalyzes the dehydration of D-mannonate. The chain is Mannonate dehydratase from Brucella canis (strain ATCC 23365 / NCTC 10854 / RM-666).